A 164-amino-acid polypeptide reads, in one-letter code: Mineralocorticoid receptor (164 aa).

One can recognise an NR LBD domain in the interval 1-162; it reads QYSWMCLSSF…EFPRCWWRSS (162 aa). Positions 15 and 143 each coordinate 21-hydroxyprogesterone. Positions 15 and 143 each coordinate aldosterone. Residues R15 and T143 each coordinate progesterone.

The protein belongs to the nuclear hormone receptor family. NR3 subfamily. As to quaternary structure, heteromultimeric cytoplasmic complex with HSP90, HSP70, and FKBP4, in the absence of ligand. After ligand binding, it translocates to the nucleus and binds to DNA as a homodimer and as a heterodimer with NR3C1. Binds the coactivator NCOA2. May interact with HSD11B2 in the absence of ligand. Binds the coactivators NCOA1, TIF1 and NRIP1. In terms of processing, phosphorylated.

The protein localises to the cytoplasm. The protein resides in the nucleus. Its subcellular location is the endoplasmic reticulum membrane. Its function is as follows. Receptor for both mineralocorticoids (MC) such as aldosterone and glucocorticoids (GC) such as corticosterone or cortisol. Binds to mineralocorticoid response elements (MRE) and transactivates target genes. The effect of MC is to increase ion and water transport and thus raise extracellular fluid volume and blood pressure and lower potassium levels. The protein is Mineralocorticoid receptor (NR3C2) of Sus scrofa (Pig).